The chain runs to 404 residues: Glucose-1-phosphate adenylyltransferase 2 (404 aa).

Alpha-D-glucose 1-phosphate contacts are provided by residues Y97, G162, 177–178 (EK), and S195.

The protein belongs to the bacterial/plant glucose-1-phosphate adenylyltransferase family. As to quaternary structure, homotetramer.

The enzyme catalyses alpha-D-glucose 1-phosphate + ATP + H(+) = ADP-alpha-D-glucose + diphosphate. It functions in the pathway glycan biosynthesis; glycogen biosynthesis. Involved in the biosynthesis of ADP-glucose, a building block required for the elongation reactions to produce glycogen. Catalyzes the reaction between ATP and alpha-D-glucose 1-phosphate (G1P) to produce pyrophosphate and ADP-Glc. The polypeptide is Glucose-1-phosphate adenylyltransferase 2 (Vibrio parahaemolyticus serotype O3:K6 (strain RIMD 2210633)).